The following is a 214-amino-acid chain: NAD(P)H-quinone oxidoreductase subunit 5, chloroplastic (214 aa).

A run of 2 helical transmembrane segments spans residues 84–104 (LFPLLILLLFTFFIGFIGIPF) and 152–172 (SLAILGLFIAYIFYGSAYSFF).

Belongs to the complex I subunit 5 family. As to quaternary structure, NDH is composed of at least 16 different subunits, 5 of which are encoded in the nucleus.

The protein localises to the plastid. Its subcellular location is the chloroplast thylakoid membrane. It carries out the reaction a plastoquinone + NADH + (n+1) H(+)(in) = a plastoquinol + NAD(+) + n H(+)(out). It catalyses the reaction a plastoquinone + NADPH + (n+1) H(+)(in) = a plastoquinol + NADP(+) + n H(+)(out). In terms of biological role, NDH shuttles electrons from NAD(P)H:plastoquinone, via FMN and iron-sulfur (Fe-S) centers, to quinones in the photosynthetic chain and possibly in a chloroplast respiratory chain. The immediate electron acceptor for the enzyme in this species is believed to be plastoquinone. Couples the redox reaction to proton translocation, and thus conserves the redox energy in a proton gradient. This is NAD(P)H-quinone oxidoreductase subunit 5, chloroplastic (ndhF) from Brachypodium pinnatum (Tor grass).